The following is a 166-amino-acid chain: Calmodulin-like protein 5 (166 aa).

EF-hand domains follow at residues 11–46 (EQVA…LGQT), 47–82 (PTRE…KASR), 96–131 (AADE…LGEK), and 132–166 (LTDE…LSDQ). Ca(2+)-binding residues include aspartate 24, aspartate 26, aspartate 28, cysteine 30, glutamate 35, aspartate 60, aspartate 62, asparagine 64, threonine 66, glutamate 71, aspartate 109, aspartate 111, aspartate 113, and glutamate 120. Position 131 is an N6,N6,N6-trimethyllysine (lysine 131). Residues aspartate 145, aspartate 147, aspartate 149, glutamine 151, and glutamate 156 each coordinate Ca(2+).

This sequence belongs to the calmodulin family.

Functionally, potential calcium sensor. The protein is Calmodulin-like protein 5 (CML5) of Oryza sativa subsp. japonica (Rice).